The following is a 526-amino-acid chain: Microphthalmia-associated transcription factor (526 aa).

The segment at 1-54 is disordered; that stretch reads MQSESGIVPDFEVGEEFHEEPKTYYELKSQPLKSSSSAEHPGASKPPISSSSMT. Ser5 is modified (phosphoserine; by MTOR). Over residues 15–25 the composition is skewed to basic and acidic residues; the sequence is EEFHEEPKTYY. Positions 41 to 54 are enriched in low complexity; it reads PGASKPPISSSSMT. A Phosphoserine; by MAPK modification is found at Ser180. A transactivation region spans residues 224–295; that stretch reads DDVIDDIISL…PNIKRELTAC (72 aa). Ser280 bears the Phosphoserine; by MARK3 mark. Lys289 is covalently cross-linked (Glycyl lysine isopeptide (Lys-Gly) (interchain with G-Cter in SUMO)). The bHLH domain occupies 311–364; it reads QKKDNHNLIERRRRFNINDRIKELGTLIPKSNDPDMRWNKGTILKASVDYIRKL. Positions 355-402 form a coiled coil; the sequence is KASVDYIRKLQREQQRAKELENRQKKLEHANRHLLLRIQELEMQARAH. Residues 374-395 form a leucine-zipper region; that stretch reads LENRQKKLEHANRHLLLRIQEL. The interval 401 to 431 is DNA-binding regulation; sequence AHGLSLIPSTGLCSPDLVNRIIKQEPVLENC. Ser405 carries the phosphoserine; by GSK3 modification. Position 414 is a phosphoserine (Ser414). Lys423 is covalently cross-linked (Glycyl lysine isopeptide (Lys-Gly) (interchain with G-Cter in SUMO)). At Ser491 the chain carries Phosphoserine. A disordered region spans residues 496-526; the sequence is TDPLLSSVSPGASKTSSRRSSMSMEETEHTC. Over residues 499–509 the composition is skewed to polar residues; the sequence is LLSSVSPGASK. Phosphoserine; by RPS6KA1 is present on Ser516.

The protein belongs to the MiT/TFE family. As to quaternary structure, homodimer or heterodimer; dimerization is mediated via the coiled coil region. Efficient DNA binding requires dimerization with another bHLH protein. Binds DNA in the form of homodimer or heterodimer with either TFE3, TFEB or TFEC. Interacts with small GTPases Rag (RagA/RRAGA, RagB/RRAGB, RagC/RRAGC and/or RagD/RRAGD); promoting its recruitment to lysosomal membrane in the presence of nutrients. Interacts with KARS1. Identified in a complex with HINT1 and CTNNB1. Interacts with VSX2. Post-translationally, when nutrients are present, phosphorylation by MTOR at Ser-5 via non-canonical mTORC1 pathway promotes ubiquitination by the SCF(BTRC) complex, followed by degradation. Phosphorylation at Ser-405 significantly enhances the ability to bind the tyrosinase promoter. Phosphorylation by MARK3/cTAK1 at Ser-280 promotes association with 14-3-3/YWHA adapters and retention in the cytosol. Phosphorylated at Ser-180 and Ser-516 following KIT signaling, triggering a short live activation: Phosphorylation at Ser-180 and Ser-516 by MAPK and RPS6KA1, respectively, activate the transcription factor activity but also promote ubiquitination and subsequent degradation by the proteasome. Phosphorylated in response to blue light (415nm). In terms of processing, ubiquitinated by the SCF(BTRC) and SCF(FBXW11) complexes following phosphorylation ar Ser-5 by MTOR, leading to its degradation by the proteasome. Ubiquitinated following phosphorylation at Ser-180, leading to subsequent degradation by the proteasome. Deubiquitinated by USP13, preventing its degradation. Expressed in melanocytes (at protein level). In terms of tissue distribution, expressed in the retinal pigment epithelium, brain, and placenta. Expressed in the kidney. As to expression, expressed in the kidney and retinal pigment epithelium. Expressed in the kidney. In terms of tissue distribution, expressed in melanocytes.

It localises to the nucleus. It is found in the cytoplasm. Its subcellular location is the lysosome membrane. Functionally, transcription factor that acts as a master regulator of melanocyte survival and differentiation as well as melanosome biogenesis. Binds to M-boxes (5'-TCATGTG-3') and symmetrical DNA sequences (E-boxes) (5'-CACGTG-3') found in the promoter of pigmentation genes, such as tyrosinase (TYR). Involved in the cellular response to amino acid availability by acting downstream of MTOR: in the presence of nutrients, MITF phosphorylation by MTOR promotes its inactivation. Upon starvation or lysosomal stress, inhibition of MTOR induces MITF dephosphorylation, resulting in transcription factor activity. Plays an important role in melanocyte development by regulating the expression of tyrosinase (TYR) and tyrosinase-related protein 1 (TYRP1). Plays a critical role in the differentiation of various cell types, such as neural crest-derived melanocytes, mast cells, osteoclasts and optic cup-derived retinal pigment epithelium. The protein is Microphthalmia-associated transcription factor of Homo sapiens (Human).